Here is a 118-residue protein sequence, read N- to C-terminus: Small ribosomal subunit protein uS13 (118 aa).

Positions 94-118 are disordered; sequence GLPVRGQRTKTNARTRKGPRKPIRK.

The protein belongs to the universal ribosomal protein uS13 family. Part of the 30S ribosomal subunit. Forms a loose heterodimer with protein S19. Forms two bridges to the 50S subunit in the 70S ribosome.

Its function is as follows. Located at the top of the head of the 30S subunit, it contacts several helices of the 16S rRNA. In the 70S ribosome it contacts the 23S rRNA (bridge B1a) and protein L5 of the 50S subunit (bridge B1b), connecting the 2 subunits; these bridges are implicated in subunit movement. Contacts the tRNAs in the A and P-sites. This is Small ribosomal subunit protein uS13 from Pseudomonas aeruginosa (strain LESB58).